The chain runs to 429 residues: Methanol:N,N-dimethyl-4-nitrosoaniline oxidoreductase (429 aa).

The protein belongs to the iron-containing alcohol dehydrogenase family. As to quaternary structure, homodecamer. Requires Mg(2+) as cofactor. Zn(2+) is required as a cofactor. The cofactor is NADPH.

The enzyme catalyses methanol + A = formaldehyde + AH2. Its activity is regulated as follows. Inhibited by azide and hydrazine. Functionally, catalyzes the oxidation of methanol to yield formaldehyde. While the in vivo electron acceptor is not known, N,N-dimethyl-4-nitrosoaniline (NDMA) can serve this function in vitro and is reduced to 4-(hydroxylamino)-N,N-dimethylaniline. It can also use various other primary alcohols, polyols and formaldehyde. In addition, MNO is able to produce methylformate from methanol plus formaldehyde, and possesses a formaldehyde dismutase and a NADH-dependent formaldehyde reductase activity. In Amycolatopsis methanolica, this protein is Methanol:N,N-dimethyl-4-nitrosoaniline oxidoreductase (mno).